Here is a 122-residue protein sequence, read N- to C-terminus: Basic phospholipase A2 LmTX-I (122 aa).

Disulfide bonds link cysteine 26/cysteine 115, cysteine 28/cysteine 44, cysteine 43/cysteine 95, cysteine 49/cysteine 122, cysteine 50/cysteine 88, and cysteine 75/cysteine 86. Tyrosine 27, glycine 29, and glycine 31 together coordinate Ca(2+). The active site involves histidine 47. Aspartate 48 contacts Ca(2+). Residue aspartate 89 is part of the active site.

In terms of assembly, monomer. It depends on Ca(2+) as a cofactor. In terms of tissue distribution, expressed by the venom gland.

It localises to the secreted. The catalysed reaction is a 1,2-diacyl-sn-glycero-3-phosphocholine + H2O = a 1-acyl-sn-glycero-3-phosphocholine + a fatty acid + H(+). Its activity is regulated as follows. Inhibited by Mn(2+), Mg(2+), Zn(2+) and Cu(2+). Snake venom phospholipase A2 (PLA2) that displays neurotoxic and myotoxic activities. Induces inflammatory edema by mechanisms involving mast cell activation and arachidonic acid metabolites. Increases plasma creatine kinase activity. PLA2 catalyzes the calcium-dependent hydrolysis of the 2-acyl groups in 3-sn-phosphoglycerides. The sequence is that of Basic phospholipase A2 LmTX-I from Lachesis muta muta (Bushmaster).